A 311-amino-acid polypeptide reads, in one-letter code: MEFIAQFLEMLLAERALSKNSILSYKRDLLDFQHYLAAQKISELNITTGNIRKWIEYLASNNLHARSINRKISTIKSYYAFLISENHTKFNPVLNIDLPKYQNKLPIILSIDQIKLILEYCSKDNTPEGIRLNAMINLLYASGLRVSELVSLKLADILTNNTSKGTVRKIFSVLGKGNKERVIVINDQAVLSIIKYLEIRDFFINKAKSKNLIYLFPSSAVAGYMTRQNFAILLKSVALYTGLNPEHVSPHILRHSFASHLLEGGADLRVIQELLGHADISTTQIYTHLHTNHLKKALLHHPLNKNSFILS.

A Core-binding (CB) domain is found at 1–83 (MEFIAQFLEM…TIKSYYAFLI (83 aa)). Residues 104 to 299 (KLPIILSIDQ…HTNHLKKALL (196 aa)) form the Tyr recombinase domain. Catalysis depends on residues Arg145, Lys176, His251, Arg254, and His277. Tyr286 serves as the catalytic O-(3'-phospho-DNA)-tyrosine intermediate.

Belongs to the 'phage' integrase family. XerD subfamily. As to quaternary structure, forms a cyclic heterotetrameric complex composed of two molecules of XerC and two molecules of XerD.

It is found in the cytoplasm. In terms of biological role, site-specific tyrosine recombinase, which acts by catalyzing the cutting and rejoining of the recombining DNA molecules. The XerC-XerD complex is essential to convert dimers of the bacterial chromosome into monomers to permit their segregation at cell division. It also contributes to the segregational stability of plasmids. This is Tyrosine recombinase XerD from Rickettsia prowazekii (strain Madrid E).